Consider the following 190-residue polypeptide: Protein LZIC (190 aa).

A coiled-coil region spans residues 6-64; the sequence is TTETSKLKQNLEEQLDRLMQQLQDLEECREELDADEYEETKKETLEQLSEINDSLKKIM.

This sequence belongs to the CTNNBIP1 family. Does not interact with CTNNB1.

In Gallus gallus (Chicken), this protein is Protein LZIC (LZIC).